We begin with the raw amino-acid sequence, 1143 residues long: DNA-directed RNA polymerase subunit beta (1143 aa).

Belongs to the RNA polymerase beta chain family. As to quaternary structure, in plastids the minimal PEP RNA polymerase catalytic core is composed of four subunits: alpha, beta, beta', and beta''. When a (nuclear-encoded) sigma factor is associated with the core the holoenzyme is formed, which can initiate transcription.

Its subcellular location is the plastid. The protein resides in the chloroplast. The enzyme catalyses RNA(n) + a ribonucleoside 5'-triphosphate = RNA(n+1) + diphosphate. In terms of biological role, DNA-dependent RNA polymerase catalyzes the transcription of DNA into RNA using the four ribonucleoside triphosphates as substrates. The polypeptide is DNA-directed RNA polymerase subunit beta (Porphyra purpurea (Red seaweed)).